Consider the following 244-residue polypeptide: Salivary gland SP38-40.A protein (244 aa).

The signal sequence occupies residues 1-21 (MRIKFLVVLAVICLFAHYASA). 3 disordered regions span residues 23–91 (GMGG…EKKQ), 137–169 (PPPGAKKDDKKEKKTVKVVKPPKEKPPKKLRKE), and 206–244 (VQGKQKKGAKKAKGGKKAAPKPGPKPGPKQADKPKDAKK). 2 stretches are compositionally biased toward basic and acidic residues: residues 26–86 (GDKK…EVKK) and 157–169 (PPKEKPPKKLRKE). Tandem repeats lie at residues 29–34 (KPKDAP) and 35–40 (KPKDAP). The interval 29–47 (KPKDAPKPKDAPKPKEVKP) is 3 X 6 AA approximate tandem repeats of K-P-K-D-A-P. One copy of the 1-3; approximate repeat lies at 41–47 (KPKEVKP). Repeat copies occupy residues 156–159 (KPPK) and 161–164 (KPPK). Positions 156–168 (KPPKEKPPKKLRK) are 3 X 4 AA approximate tandem repeats of K-P-P-K. The stretch at 165-168 (KLRK) is one 2-3; approximate repeat. Residues 209 to 224 (KQKKGAKKAKGGKKAA) are compositionally biased toward basic residues. Repeat copies occupy residues 225-228 (PKPG), 229-232 (PKPG), and 233-236 (PKQA). Residues 225 to 240 (PKPGPKPGPKQADKPK) are 4 X 4 AA approximate tandem repeats of P-K-[PQ]-[GA]. Positions 235-244 (QADKPKDAKK) are enriched in basic and acidic residues. The stretch at 237–240 (DKPK) is one 3-4; approximate repeat.

Salivary gland.

The protein localises to the secreted. In terms of biological role, used by the larvae to construct a supramolecular structure, the larval tube. The polypeptide is Salivary gland SP38-40.A protein (SP38-40.A) (Chironomus tentans (Midge)).